A 768-amino-acid polypeptide reads, in one-letter code: Translation factor GUF1 homolog, mitochondrial (768 aa).

The transit peptide at M1 to C29 directs the protein to the mitochondrion. A tr-type G domain is found at S110 to S293. GTP contacts are provided by residues A119–T126, D184–H188, and T238–D241.

Belongs to the TRAFAC class translation factor GTPase superfamily. Classic translation factor GTPase family. LepA subfamily.

The protein localises to the mitochondrion inner membrane. The enzyme catalyses GTP + H2O = GDP + phosphate + H(+). In terms of biological role, promotes mitochondrial protein synthesis. May act as a fidelity factor of the translation reaction, by catalyzing a one-codon backward translocation of tRNAs on improperly translocated ribosomes. Binds to mitochondrial ribosomes in a GTP-dependent manner. The chain is Translation factor GUF1 homolog, mitochondrial from Trypanosoma brucei brucei (strain 927/4 GUTat10.1).